The primary structure comprises 989 residues: Cellulose synthase A catalytic subunit 4 [UDP-forming] (989 aa).

Residues 1–184 (MMESGVPPCA…SRIIPISKNK (184 aa)) are Cytoplasmic-facing. Zn(2+)-binding residues include cysteine 9, cysteine 12, cysteine 20, cysteine 23, cysteine 28, cysteine 31, cysteine 43, and cysteine 46. The segment at 9–47 (CAACGDDAHAACRACSYALCKACLDEDAAEGRTTCARCG) adopts an RING-type; degenerate zinc-finger fold. Residues 138-149 (KKEKKASAKKAA) are compositionally biased toward basic residues. The tract at residues 138–158 (KKEKKASAKKAAAKAQAPPVE) is disordered. Residues 185-205 (LTPYRAVIIMRLVVLGLFFHY) form a helical membrane-spanning segment. Topologically, residues 206-213 (RITNPVYS) are extracellular. The chain crosses the membrane as a helical span at residues 214–234 (AFGLWMTSVICEIWFGFSWIL). Topologically, residues 235 to 772 (DQFPKWCPIN…INTIVYPFTS (538 aa)) are cytoplasmic. UDP-alpha-D-glucose-binding residues include serine 272, lysine 278, glutamate 279, and aspartate 308. Residue aspartate 308 is part of the active site. Residues 362-389 (VKERRAMKRDYEEYKVRINALVAKAQKT) adopt a coiled-coil conformation. Lysine 449 provides a ligand contact to UDP-alpha-D-glucose. Lysine 450 and aspartate 474 together coordinate Mn(2+). The active site involves aspartate 688. Residues 773–793 (LPLIAYCCLPAICLLTGKFII) form a helical membrane-spanning segment. Residues 794–798 (PTLSN) lie on the Extracellular side of the membrane. A helical transmembrane segment spans residues 799–819 (AATIWFLGLFISIIVTSVLEL). Topologically, residues 820–835 (RWSGIGIEDWWRNEQF) are cytoplasmic. A helical membrane pass occupies residues 836–856 (WVIGGVSAHLFAVFQGILKMI). Over 857–884 (AGLDTNFTVTAKATDDTEFGELYVFKWT) the chain is Extracellular. Residue asparagine 862 is glycosylated (N-linked (GlcNAc...) asparagine). A helical transmembrane segment spans residues 885-905 (TVLIPPTSILVLNLVGVVAGF). The Cytoplasmic portion of the chain corresponds to 906–916 (SDALNSGYESW). A helical membrane pass occupies residues 917–937 (GPLFGKVFFAMWVIMHLYPFL). At 938–946 (KGLMGRQNR) the chain is on the extracellular side. The helical transmembrane segment at 947–967 (TPTIVVLWSVLLASVFSLLWV) threads the bilayer. Residues 968 to 989 (KIDPFIGSSETTTTNSCANFDC) lie on the Cytoplasmic side of the membrane.

Belongs to the glycosyltransferase 2 family. Plant cellulose synthase subfamily. Requires Mn(2+) as cofactor. Zn(2+) serves as cofactor.

It localises to the cell membrane. The enzyme catalyses [(1-&gt;4)-beta-D-glucosyl](n) + UDP-alpha-D-glucose = [(1-&gt;4)-beta-D-glucosyl](n+1) + UDP + H(+). It functions in the pathway glycan metabolism; plant cellulose biosynthesis. Its function is as follows. Catalytic subunit of cellulose synthase terminal complexes ('rosettes'), required for beta-1,4-glucan microfibril crystallization, a major mechanism of the cell wall formation. Involved in the secondary cell wall formation. This is Cellulose synthase A catalytic subunit 4 [UDP-forming] (CESA4) from Oryza sativa subsp. japonica (Rice).